A 426-amino-acid polypeptide reads, in one-letter code: Cephalotocin receptor 2 (426 aa).

Over 1 to 51 (MYQAMEVESTSPSGFFLDFYTQSTIPTTDFLNNTNSSHPIRDEKLVKIEIA) the chain is Extracellular. N-linked (GlcNAc...) asparagine glycosylation is found at Asn-32 and Asn-35. A helical transmembrane segment spans residues 52–72 (VLGTCFTLAIINNLCVLLVLL). Topologically, residues 73 to 84 (WRRKKVRRMQMF) are cytoplasmic. Residues 85–105 (ILHLSIADLIVAFFNILPQLI) form a helical membrane-spanning segment. Topologically, residues 106–120 (WDITFRFMAGDAMCR) are extracellular. A disulfide bridge connects residues Cys-119 and Cys-198. A helical membrane pass occupies residues 121-141 (FIKYAQMFSLYLSTYILIMTA). The Cytoplasmic portion of the chain corresponds to 142 to 165 (VDRYRAICHPLSNQTWTPCMVYCK). Residues 166–186 (IFIAYAIATIFSIPQAILFQM) form a helical membrane-spanning segment. Residues 187–208 (QEVNEGSGIYDCWVHFEPAWVL) lie on the Extracellular side of the membrane. The chain crosses the membrane as a helical span at residues 209-229 (TAYALYIFFALYLIPILILFF). The Cytoplasmic portion of the chain corresponds to 230–288 (TYGSICYTIWAKYRHAIKTKKDANTRYPQRRKKKGVILRTHSVHGFSKAKLNSVKLTFA). A helical transmembrane segment spans residues 289-309 (VIVTYIICWSPFFVSQIWWLF). Topologically, residues 310–319 (DETVVGNAGV) are extracellular. A helical membrane pass occupies residues 320–340 (VVILLMACLNSCTNPWIYLIF). Residues 341-426 (NRNYISNVLP…DQFIYSDKTT (86 aa)) are Cytoplasmic-facing. A disordered region spans residues 373–426 (GSVRRDSRKTSDPKRISESRRISDARRISGKTQKNNSSSPRKTSDQFIYSDKTT). The segment covering 375 to 399 (VRRDSRKTSDPKRISESRRISDARR) has biased composition (basic and acidic residues). The segment covering 402 to 426 (GKTQKNNSSSPRKTSDQFIYSDKTT) has biased composition (polar residues).

It belongs to the G-protein coupled receptor 1 family. Vasopressin/oxytocin receptor subfamily. In terms of tissue distribution, present in various peripheral tissues with highest expression in branchia and vas deferens. Very low expression detected in nervous system.

It localises to the cell membrane. In terms of biological role, acts as a receptor for cephalotocin. The sequence is that of Cephalotocin receptor 2 from Octopus vulgaris (Common octopus).